We begin with the raw amino-acid sequence, 1059 residues long: Carbamoyl phosphate synthase large chain (1059 aa).

The tract at residues 1 to 401 (MPKRSDIKKI…SLLKACRSLE (401 aa)) is carboxyphosphate synthetic domain. Arg129, Arg169, Gly175, Gly176, Arg208, Ile210, Glu215, Gly241, Ile242, His243, Gln284, and Glu298 together coordinate ATP. Residues 133 to 327 (KQLMEELEQP…IAKLAAKIAV (195 aa)) form the ATP-grasp 1 domain. Gln284, Glu298, and Asn300 together coordinate Mg(2+). Gln284, Glu298, and Asn300 together coordinate Mn(2+). The tract at residues 402–546 (IGVYHNEMSE…YSTYEWENES (145 aa)) is oligomerization domain. Residues 547–929 (IKSDKESVIV…ALYKAFEASY (383 aa)) form a carbamoyl phosphate synthetic domain region. One can recognise an ATP-grasp 2 domain in the interval 671–861 (EQALKDLDIP…MAQVATNLIL (191 aa)). Residues Arg707, Ser746, Ile748, Glu752, Gly777, Val778, His779, Ser780, Gln820, and Glu832 each coordinate ATP. Mg(2+)-binding residues include Gln820, Glu832, and Asn834. Mn(2+) is bound by residues Gln820, Glu832, and Asn834. The MGS-like domain occupies 930–1059 (LHLPTFGNVI…ESRSFTTEAI (130 aa)). Residues 930 to 1059 (LHLPTFGNVI…ESRSFTTEAI (130 aa)) are allosteric domain.

Belongs to the CarB family. As to quaternary structure, composed of two chains; the small (or glutamine) chain promotes the hydrolysis of glutamine to ammonia, which is used by the large (or ammonia) chain to synthesize carbamoyl phosphate. Tetramer of heterodimers (alpha,beta)4. Requires Mg(2+) as cofactor. It depends on Mn(2+) as a cofactor.

The enzyme catalyses hydrogencarbonate + L-glutamine + 2 ATP + H2O = carbamoyl phosphate + L-glutamate + 2 ADP + phosphate + 2 H(+). It carries out the reaction hydrogencarbonate + NH4(+) + 2 ATP = carbamoyl phosphate + 2 ADP + phosphate + 2 H(+). The protein operates within amino-acid biosynthesis; L-arginine biosynthesis; carbamoyl phosphate from bicarbonate: step 1/1. Its pathway is pyrimidine metabolism; UMP biosynthesis via de novo pathway; (S)-dihydroorotate from bicarbonate: step 1/3. Its function is as follows. Large subunit of the glutamine-dependent carbamoyl phosphate synthetase (CPSase). CPSase catalyzes the formation of carbamoyl phosphate from the ammonia moiety of glutamine, carbonate, and phosphate donated by ATP, constituting the first step of 2 biosynthetic pathways, one leading to arginine and/or urea and the other to pyrimidine nucleotides. The large subunit (synthetase) binds the substrates ammonia (free or transferred from glutamine from the small subunit), hydrogencarbonate and ATP and carries out an ATP-coupled ligase reaction, activating hydrogencarbonate by forming carboxy phosphate which reacts with ammonia to form carbamoyl phosphate. The chain is Carbamoyl phosphate synthase large chain from Streptococcus thermophilus (strain ATCC BAA-250 / LMG 18311).